We begin with the raw amino-acid sequence, 560 residues long: Oxygen-dependent choline dehydrogenase (560 aa).

6 to 35 (DYIIVGAGSAGCVLADRLSESGDHSVLLLE) is a binding site for FAD. H470 acts as the Proton acceptor in catalysis.

Belongs to the GMC oxidoreductase family. FAD is required as a cofactor.

The catalysed reaction is choline + A = betaine aldehyde + AH2. It carries out the reaction betaine aldehyde + NAD(+) + H2O = glycine betaine + NADH + 2 H(+). Its pathway is amine and polyamine biosynthesis; betaine biosynthesis via choline pathway; betaine aldehyde from choline (cytochrome c reductase route): step 1/1. Its function is as follows. Involved in the biosynthesis of the osmoprotectant glycine betaine. Catalyzes the oxidation of choline to betaine aldehyde and betaine aldehyde to glycine betaine at the same rate. In Vibrio vulnificus (strain YJ016), this protein is Oxygen-dependent choline dehydrogenase.